The sequence spans 363 residues: Ferrochelatase (363 aa).

Residues histidine 209 and glutamate 290 each contribute to the Fe cation site.

It belongs to the ferrochelatase family.

It is found in the cytoplasm. It catalyses the reaction heme b + 2 H(+) = protoporphyrin IX + Fe(2+). Its pathway is porphyrin-containing compound metabolism; protoheme biosynthesis; protoheme from protoporphyrin-IX: step 1/1. Its function is as follows. Catalyzes the ferrous insertion into protoporphyrin IX. In Methylibium petroleiphilum (strain ATCC BAA-1232 / LMG 22953 / PM1), this protein is Ferrochelatase.